The primary structure comprises 185 residues: Large ribosomal subunit protein uL22 (185 aa).

The tract at residues 157-185 is disordered; that stretch reads VAAPSPEEDAPKKKQSKKKMARQKLMQRD. Residues 169-178 show a composition bias toward basic residues; sequence KKQSKKKMAR.

The protein belongs to the universal ribosomal protein uL22 family.

The polypeptide is Large ribosomal subunit protein uL22 (RpL17) (Ixodes scapularis (Black-legged tick)).